A 495-amino-acid polypeptide reads, in one-letter code: Keratin, type II cytoskeletal 74 (495 aa).

Residues 1-105 (MASCHTAGHR…DPEIQKVRAQ (105 aa)) form a head region. The tract at residues 106-141 (EREQIKALNDKFASFIDKVRFLEQQNQVLQTKWELL) is coil 1A. In terms of domain architecture, IF rod spans 106-419 (EREQIKALND…KLLEGEENRM (314 aa)). The segment at 142-160 (QQLDLSNCRRNLEPVYEAH) is linker 1. Positions 161–252 (ISNLRKQLEM…CLYDEEISQL (92 aa)) are coil 1B. The interval 253–276 (QTHASETSVILSMDNNRDLDLAGI) is linker 12. Residues 277–415 (IAEVRAHYED…ATYRKLLEGE (139 aa)) are coil 2. The tract at residues 416-495 (ENRMSGENPS…AAGTLARKTT (80 aa)) is tail. Residues 449 to 495 (DSEAGNAVGSPSTPRNSQSKTRGSSVDPRDAQDESAAAAGTLARKTT) form a disordered region. Residues 457 to 472 (GSPSTPRNSQSKTRGS) are compositionally biased toward polar residues.

Belongs to the intermediate filament family. Heterotetramer of two type I and two type II keratins. In terms of tissue distribution, expressed in epidermis with a particularly strong staining in the nail matrix, nail bed and hyponychium (at protein level).

In terms of biological role, has a role in hair formation. Specific component of keratin intermediate filaments in the inner root sheath (IRS) of the hair follicle. This is Keratin, type II cytoskeletal 74 from Mus musculus (Mouse).